Consider the following 137-residue polypeptide: Nucleoside diphosphate kinase (137 aa).

ATP-binding residues include K9, F57, R85, T91, and R102. H119 acts as the Pros-phosphohistidine intermediate in catalysis.

It belongs to the NDK family. Homotetramer. Mg(2+) serves as cofactor.

Its subcellular location is the cytoplasm. The enzyme catalyses a 2'-deoxyribonucleoside 5'-diphosphate + ATP = a 2'-deoxyribonucleoside 5'-triphosphate + ADP. It catalyses the reaction a ribonucleoside 5'-diphosphate + ATP = a ribonucleoside 5'-triphosphate + ADP. Functionally, major role in the synthesis of nucleoside triphosphates other than ATP. The ATP gamma phosphate is transferred to the NDP beta phosphate via a ping-pong mechanism, using a phosphorylated active-site intermediate. The polypeptide is Nucleoside diphosphate kinase (Streptococcus thermophilus (strain CNRZ 1066)).